Here is a 430-residue protein sequence, read N- to C-terminus: Tol-Pal system protein TolB (430 aa).

Positions 1–21 (MKQALRVAFGFLMLWAAVLHA) are cleaved as a signal peptide.

Belongs to the TolB family. The Tol-Pal system is composed of five core proteins: the inner membrane proteins TolA, TolQ and TolR, the periplasmic protein TolB and the outer membrane protein Pal. They form a network linking the inner and outer membranes and the peptidoglycan layer.

It localises to the periplasm. Its function is as follows. Part of the Tol-Pal system, which plays a role in outer membrane invagination during cell division and is important for maintaining outer membrane integrity. TolB occupies a key intermediary position in the Tol-Pal system because it communicates directly with both membrane-embedded components, Pal in the outer membrane and TolA in the inner membrane. The polypeptide is Tol-Pal system protein TolB (Klebsiella pneumoniae (strain 342)).